Consider the following 835-residue polypeptide: Ribonuclease R (835 aa).

In terms of domain architecture, RNB spans 267–593; that stretch reads RVDLRELPLV…LLHRAIKYLI (327 aa). The region spanning 652-733 is the S1 motif domain; sequence GDELEGVIAN…DDKQIDFELV (82 aa). The span at 739-754 shows a compositional bias: basic and acidic residues; the sequence is LRGEGKTAKKRAAEAK. The interval 739–835 is disordered; it reads LRGEGKTAKK…KTKRTKQDAQ (97 aa). The segment covering 755–764 has biased composition (basic residues); it reads RKAKEKKRAA. Residues 765–777 are compositionally biased toward low complexity; that stretch reads TRSSSKESATARA. The span at 783 to 793 shows a compositional bias: basic and acidic residues; it reads PTKRPEQTDSG. A compositionally biased stretch (basic residues) spans 809–829; it reads KPKVKKAHKKKPHSKPKKTKR.

Belongs to the RNR ribonuclease family. RNase R subfamily.

It localises to the cytoplasm. It catalyses the reaction Exonucleolytic cleavage in the 3'- to 5'-direction to yield nucleoside 5'-phosphates.. Its function is as follows. 3'-5' exoribonuclease that releases 5'-nucleoside monophosphates and is involved in maturation of structured RNAs. The sequence is that of Ribonuclease R from Vibrio parahaemolyticus serotype O3:K6 (strain RIMD 2210633).